We begin with the raw amino-acid sequence, 405 residues long: Tyrosine-protein phosphatase non-receptor type eak-6 (405 aa).

A Tyrosine-protein phosphatase domain is found at 30-309; sequence INQRINIIAD…SFIYDIIIKY (280 aa). C248 functions as the Phosphocysteine intermediate in the catalytic mechanism.

This sequence belongs to the protein-tyrosine phosphatase family. Expressed in the 2 embryonic head hypodermal cells XXXL/R.

It localises to the cytoplasm. The protein localises to the cell membrane. The catalysed reaction is O-phospho-L-tyrosyl-[protein] + H2O = L-tyrosyl-[protein] + phosphate. Functionally, putative phosphatase which, together with eak-4 and sdf-9, negatively regulates dauer larva formation downstream of insulin-like receptor daf-2 and in parallel of age-1, pdk-1 and akt-1. The protein is Tyrosine-protein phosphatase non-receptor type eak-6 of Caenorhabditis elegans.